Consider the following 323-residue polypeptide: MSNLTLSQFLQQEKGNLTPELAQVIDTIAATCKTIDQALQKGALAGILGSAGNENVQGETQKKLDVISNDYLIDALKVHPHVGGLASEELDDFTPAQENGEYLVLFDPLDGSSNIDINMCVGTIFSILPAKNAITQAQDFMQAGTQQVAAGYVLYGPSTMMALTVGNGVAFFTLDPVTQTFLLTTENVQVSADTQEFAINASNQRHWEQPVKQYIEELLAGKTSVREKDFNMRWVACMVGDVHRILCRGGIFLYPYDLKDPKKAGRLRLMYEANPMSMLIEQAGGASTTGRVRILEIEPTELHQRVPVIIGSKNEVERVTSYH.

Mg(2+) contacts are provided by E88, D107, L109, and D110. Residues 110–113 (DGSS) and N200 contribute to the substrate site. E272 serves as a coordination point for Mg(2+).

It belongs to the FBPase class 1 family. Homotetramer. Mg(2+) is required as a cofactor.

The protein resides in the cytoplasm. The catalysed reaction is beta-D-fructose 1,6-bisphosphate + H2O = beta-D-fructose 6-phosphate + phosphate. Its pathway is carbohydrate biosynthesis; gluconeogenesis. This chain is Fructose-1,6-bisphosphatase class 1, found in Acinetobacter baumannii (strain AYE).